A 1039-amino-acid polypeptide reads, in one-letter code: Protein male-specific lethal-1 (1039 aa).

Residues 1-13 (MDKRFKWPPKKRA) show a composition bias toward basic residues. Disordered regions lie at residues 1–44 (MDKR…HLHQ) and 171–199 (RRKNQRRNDNDDDDDDPPLPPAAPQQKLI). S18 carries the phosphoserine modification. A Phosphoserine modification is found at S238. Disordered stretches follow at residues 244–266 (HAGAVTNQPASKRSESKGRGEFN), 358–454 (GQSV…GNQN), 485–691 (KKDK…EIDV), and 729–799 (IYPP…SSTT). The span at 255–266 (KRSESKGRGEFN) shows a compositional bias: basic and acidic residues. Positions 368–392 (EEDDDEDDEDDENSDKDDDSEEDDY) are enriched in acidic residues. A compositionally biased stretch (basic and acidic residues) spans 397–407 (SDADVNARTEE). Over residues 431–445 (AHSTPNHQQKSSTQA) the composition is skewed to polar residues. A Phosphoserine modification is found at S433. T434 is modified (phosphothreonine). Phosphoserine is present on residues S492 and S496. Basic and acidic residues-rich tracts occupy residues 504–515 (PHQEDAIVDHNA) and 523–570 (PKPD…DAPK). 2 stretches are compositionally biased toward polar residues: residues 581-592 (TKTSSRESTLPK) and 609-625 (NHQSTKTQTDPVKTQRL). A Phosphoserine modification is found at S585. The residue at position 659 (T659) is a Phosphothreonine. S682 and S684 each carry phosphoserine. T747 carries the phosphothreonine modification. At S749 the chain carries Phosphoserine. T750, T751, and T753 each carry phosphothreonine. The segment covering 759 to 768 (QHAVTSSMDQ) has biased composition (polar residues). Phosphoserine occurs at positions 764 and 765. Phosphothreonine is present on T788. S810 is subject to Phosphoserine. A phosphothreonine mark is found at T813 and T832. Residues 865–983 (SLEIPKWRDV…EARDDFGVPW (119 aa)) enclose the PEHE domain. A phosphoserine mark is found at S879 and S889. An interaction with mof HAT domain region spans residues 886–904 (ELLSDATFERRHQKYVKDE). Residues 1011–1039 (IPTTAAEARHQENHSSYVFPKRRKRQKNR) are disordered. Residue T1014 is modified to Phosphothreonine. S1025 is subject to Phosphoserine. Over residues 1030 to 1039 (PKRRKRQKNR) the composition is skewed to basic residues. Residues 1032-1037 (RRKRQK) carry the Nuclear localization signal motif.

Belongs to the msl-1 family. Component of the male-specific lethal (MSL) histone acetyltransferase complex, composed of mof, mle, msl-1, msl-2 and msl-3 proteins, as well as roX1 and roX2 non-coding RNAs. Interacts (via PEHE domain) with mof (via HAT domain) and msl-3 (via MRG domain); both interactions are direct. Interacts with tamo via the nuclear localization signal. Component of a maternal MSL subcomplex composed of mof, msl-1 and msl-3. In terms of processing, phosphorylation at Ser-18, Thr743, Thr-747 and Thr-751 is required to promote phosphorylation of 'Ser-5' of the C-terminal heptapeptide repeat domain (CTD) of the largest RNA polymerase II subunit Polr2A. Phosphorylated by Cdk7 in vitro. In contrast, phosphorylation at Ser-18, Thr743, Thr-747 and Thr-751 does not affect its role in dosage compensation in males. Post-translationally, ubiquitinated by msl-2.

The protein resides in the nucleus. The protein localises to the chromosome. Functionally, component of the male-specific lethal (MSL) histone acetyltransferase complex, a multiprotein complex essential for elevating transcription of the single X chromosome in the male (X chromosome dosage compensation). The MSL complex specifically associates with the single X chromosome in males and mediates formation of H4K16ac, promoting a two-fold activation of X chromosome. In complex with msl-2, promotes ubiquitination of histone H2B. In addition to its role in dosage compensation in males, regulates the activity of gene promoters: acts together with Cdk7 to promote phosphorylation of 'Ser-5' of the C-terminal heptapeptide repeat domain (CTD) of the largest RNA polymerase II subunit Polr2A. This is Protein male-specific lethal-1 from Drosophila melanogaster (Fruit fly).